The chain runs to 213 residues: Adenylate kinase (213 aa).

ATP is bound at residue 10–15; the sequence is GCGKGT. The NMP stretch occupies residues 30–59; it reads STGDLMRKEISLNTRLGLKCQEYMNAGKYV. AMP-binding positions include Thr-31, Arg-36, 57–59, 83–86, and Gln-90; these read KYV and GYPR. Positions 124–161 are LID; sequence NRLVCPLCKASFNLETRKPKQEGLCDFDNTKLVKRSDD. Arg-125 serves as a coordination point for ATP. The Zn(2+) site is built by Cys-128 and Cys-131. 134-135 lines the ATP pocket; the sequence is SF. 2 residues coordinate Zn(2+): Cys-148 and Asp-151. Arg-158 and Arg-169 together coordinate AMP. Asp-197 is an ATP binding site.

It belongs to the adenylate kinase family. In terms of assembly, monomer.

It localises to the cytoplasm. It carries out the reaction AMP + ATP = 2 ADP. Its pathway is purine metabolism; AMP biosynthesis via salvage pathway; AMP from ADP: step 1/1. In terms of biological role, catalyzes the reversible transfer of the terminal phosphate group between ATP and AMP. Plays an important role in cellular energy homeostasis and in adenine nucleotide metabolism. This chain is Adenylate kinase, found in Mycoplasma mycoides subsp. mycoides SC (strain CCUG 32753 / NCTC 10114 / PG1).